Consider the following 497-residue polypeptide: MSIPNSFIIVGSGVFGLSLAYALSLDDRFADKKIILVDRWNFEPPNATGSVHNPAAANADTSRVIRRDYPHGPYASLALEAMKHWRGKFGENNRYVNQRLLFSGEGSSLTTPPKALETVNYIKKAYAISCELTPGGRDAVQVLDSLDEVRAFLGNTPSHPPHLPVNKDPAARDLRGYVSNDCGWADAGASIEWLRQEVLRLGRVECVVGEVESLVYSDDQRAVKGVKLVDGKVLTAELTVIAAGARSSHILGIPKLCDVYSEFVAYIQLTKEEADELRRRQWPILVNCHRGVFAVGPDHDNCLKFGHFSYSGIVDVLREASIQVPTRPDGWEAQQKYWSDPRFAFGGEVKVSALGDVDDYENPAAQRALADYRLFLLELLGPTGLQGVDTLGLDQSDNLLNNIANRPFTRVRKCWYNDTPALDFVVDYHPSYGKTLFVATGGCDHAFKFLPIIGEKTLALILRNRGDSAVSLPAGVEPSLEELSELWRFPVELLQDN.

Val-14, Phe-15, Asp-38, Asn-53, Ala-57, Asn-58, Arg-63, Val-64, and Val-211 together coordinate FAD. An S-8alpha-FAD cysteine modification is found at Cys-414. Positions 447 and 448 each coordinate FAD.

Belongs to the MSOX/MTOX family. In terms of assembly, dimer. The cofactor is FAD.

It catalyses the reaction (2S,4S,5S)-2-amino-6-(3,4-dihydroxyphenyl)-4-hydroxy-5-(methylamino)hexanoyl-[peptidyl-carrier protein] + O2 = (2S,4S)-2-amino-4-[(3S)-7,8-dihydroxy-1,2,3,4-tetrahydroisoquinolin-3-yl]-4-hydroxybutanoyl-[peptidyl-carrier protein] + H2O2. It carries out the reaction N-methyl-L-dopa + O2 = (3S)-7,8-dihydroxy-1,2,3,4-tetrahydroisoquinoline-3-carboxylate + H2O2. The catalysed reaction is N-methyl-D-dopa + O2 = (3R)-7,8-dihydroxy-1,2,3,4-tetrahydroisoquinoline-3-carboxylate + H2O2. It functions in the pathway secondary metabolite biosynthesis. Functionally, amino acid oxidase; part of the gene cluster that mediates the biosynthesis of the isoquinoline alkaloids fumisoquin A, fumisoquin B and fumisoquin C; as well as small amounts of fumipyrrole as a shunt metabolite. The products of the cluster lead to a brown coloration and are important for growth and conidiation. The nonribosomal peptide synthetase-like protein fsqF, which lacks a canonical condensation domain, is required for addition of a serine-derived dehydroalanine moiety to activated tyrosine but is not essential for the subsequent steps leading to isoquinoline formation. A different enzyme, most likely the ATP-grasp enzyme fsqD, is responsible for activation of tyrosine. Three additional enzymes encoded by the fsq cluster, the N-methyltransferase fsqC, the phenol 2-monooxygenase fsqG and the FAD-dependent oxidase fsqB, catalyze the formation of the isoquinoline ring system in the fumisoquins. FsqB converts the fspF thiolation domain-bound (2S,4S,5S)-2-amino-6-(3,4-dihydroxyphenyl)-4-hydroxy-5-(methylamino)hexanoyl into isoquinoline. The cyclization most likely proceeds via a two-step mechanism, beginning with FAD-dependent oxidation of the methyl group to an iminium species followed by electrophilic attack on the deprotonated phenol. Is able to convert N-methyl-3,4-dihydroxy-DL-phenylalanine (N-methyl-DOPA) directly into cyclic isoquinoline, in vitro. The absence of the meta-hydroxyl group, as in L-N-methyl-tyrosine, leads to a 25-fold lower rate of reduction and the formation of the demethylated product L-tyrosine, instead of a cyclic product. Does not accept the D-stereoisomer of N-methyltyrosine, in contrast to N-methyl-DOPA, for which both stereoisomers are oxidized with similar rates. The chain is Amino acid oxidase fsqB from Aspergillus fumigatus (strain ATCC MYA-4609 / CBS 101355 / FGSC A1100 / Af293) (Neosartorya fumigata).